Reading from the N-terminus, the 660-residue chain is Bifunctional polymyxin resistance protein ArnA (660 aa).

The interval 1 to 304 is formyltransferase ArnAFT; the sequence is MKTVVFAYHD…TLGLVQGSRL (304 aa). 86–88 is a (6R)-10-formyltetrahydrofolate binding site; it reads HLI. His104 (proton donor; for formyltransferase activity) is an active-site residue. Residues Arg114 and 136-140 contribute to the (6R)-10-formyltetrahydrofolate site; that span reads VKRAD. The tract at residues 314 to 660 is dehydrogenase ArnADH; the sequence is RRTRVLILGV…RTVDLTDKPS (347 aa). Residues Asp347 and 368-369 each bind NAD(+); that span reads DI. UDP-alpha-D-glucuronate is bound by residues Ala393, Tyr398, and 432 to 433; that span reads TS. The active-site Proton acceptor; for decarboxylase activity is the Glu434. UDP-alpha-D-glucuronate is bound by residues Arg460, Asn492, 526–535, and Tyr613; that span reads KLIDGGKQKR. Arg619 functions as the Proton donor; for decarboxylase activity in the catalytic mechanism.

In the N-terminal section; belongs to the Fmt family. UDP-L-Ara4N formyltransferase subfamily. This sequence in the C-terminal section; belongs to the NAD(P)-dependent epimerase/dehydratase family. UDP-glucuronic acid decarboxylase subfamily. In terms of assembly, homohexamer, formed by a dimer of trimers.

The catalysed reaction is UDP-alpha-D-glucuronate + NAD(+) = UDP-beta-L-threo-pentopyranos-4-ulose + CO2 + NADH. The enzyme catalyses UDP-4-amino-4-deoxy-beta-L-arabinose + (6R)-10-formyltetrahydrofolate = UDP-4-deoxy-4-formamido-beta-L-arabinose + (6S)-5,6,7,8-tetrahydrofolate + H(+). It participates in nucleotide-sugar biosynthesis; UDP-4-deoxy-4-formamido-beta-L-arabinose biosynthesis; UDP-4-deoxy-4-formamido-beta-L-arabinose from UDP-alpha-D-glucuronate: step 1/3. Its pathway is nucleotide-sugar biosynthesis; UDP-4-deoxy-4-formamido-beta-L-arabinose biosynthesis; UDP-4-deoxy-4-formamido-beta-L-arabinose from UDP-alpha-D-glucuronate: step 3/3. The protein operates within bacterial outer membrane biogenesis; lipopolysaccharide biosynthesis. Functionally, bifunctional enzyme that catalyzes the oxidative decarboxylation of UDP-glucuronic acid (UDP-GlcUA) to UDP-4-keto-arabinose (UDP-Ara4O) and the addition of a formyl group to UDP-4-amino-4-deoxy-L-arabinose (UDP-L-Ara4N) to form UDP-L-4-formamido-arabinose (UDP-L-Ara4FN). The modified arabinose is attached to lipid A and is required for resistance to polymyxin and cationic antimicrobial peptides. The protein is Bifunctional polymyxin resistance protein ArnA of Escherichia coli (strain SMS-3-5 / SECEC).